The chain runs to 296 residues: Immediate early response gene 5-like protein (296 aa).

It belongs to the IER family.

The polypeptide is Immediate early response gene 5-like protein (ier5l) (Xenopus tropicalis (Western clawed frog)).